A 1654-amino-acid chain; its full sequence is Microtubule cross-linking factor 2 (1654 aa).

Residues 1–188 form a disordered region; it reads METPAGESSA…VAASSVGSSR (188 aa). A compositionally biased stretch (low complexity) spans 55 to 66; sequence GSATACGTASSA. Residues 102-113 are compositionally biased toward pro residues; sequence GTGPRPPPPPPS. Residues 132-147 are compositionally biased toward low complexity; it reads LGLELALSSDAESAAG. The tract at residues 209–238 is required for association with Golgi apparatus membrane; that stretch reads PGGLVRELEELRSENDYLKDEIEELRAEML. 5 coiled-coil regions span residues 216-279, 308-349, 448-546, 816-843, and 1079-1113; these read LEEL…AERR, SMRL…LQTE, LKLV…YRSE, IKDLQLVLAEAHDSLRGLQEQLSQERQL, and SQEKLQLVERLQGEKQQVEQQVKELQNRLSQLQKA. The segment at 348 to 379 is disordered; sequence TELDRPREHSLKKRGTRSLGKTDKKPTAQEDS. A compositionally biased stretch (basic and acidic residues) spans 1122 to 1145; the sequence is SDMEKQDNSWKEARSEKTHDKEGV. Positions 1122-1146 are disordered; that stretch reads SDMEKQDNSWKEARSEKTHDKEGVS. 2 positions are modified to phosphoserine: serine 1165 and serine 1251. The segment at 1406–1505 is KR-rich domain required for microtubules binding; the sequence is LVSVRSKQIS…HSGSTESVWK (100 aa). Disordered regions lie at residues 1427–1450, 1537–1560, and 1627–1654; these read RPCCSPKYGSPKLQRRSVSKLDST, PTTAAGEESCKKPEPLSPASYHQP, and NTIRHSPSKCRLHPSESGWGGEERAAPQ. A compositionally biased stretch (basic residues) spans 1628 to 1638; it reads TIRHSPSKCRL.

It belongs to the MTCL family. In terms of assembly, interacts with CLASP2. Interacts with CLASP1. The C-terminal SOGA 25 kDa form occurs as a monomer. Post-translationally, proteolytically cleaved into a C-terminal SOGA 25 kDa form that is detected in plasma. Proteolytically cleaved in primary hepatocytes into a C-terminal SOGA 80 kDa form. Phosphorylated during mitosis in a CDK1-dependent manner. Expressed in liver (at protein level).

It is found in the secreted. It localises to the cytoplasm. The protein localises to the cytoskeleton. The protein resides in the golgi apparatus membrane. Its subcellular location is the midbody. Functionally, microtubule-associated factor that enables integration of the centrosomal and Golgi-associated microtubules on the Golgi membrane, supporting directional migration. Preferentially acts on the perinuclear microtubules accumulated around the Golgi. Associates with the Golgi membrane through the N-terminal coiled-coil region and directly binds microtubules through the C-terminal domain. Required for faithful chromosome segregation during mitosis. Regulates autophagy by playing a role in the reduction of glucose production in an adiponectin- and insulin-dependent manner. The chain is Microtubule cross-linking factor 2 (Mtcl2) from Mus musculus (Mouse).